Consider the following 121-residue polypeptide: MVLQTQVFISLLLWISGAYGDIVMTQSPDSLAVSLGERATINCKSSQSVLYSSNNKNYLAWYQQKPGQPPKLLIYWASTRESGVPDRFSGSGSGTDFTLTISSLQAEDVAVYYCQQYYSTP.

A signal peptide spans 1–20 (MVLQTQVFISLLLWISGAYG). The tract at residues 21–43 (DIVMTQSPDSLAVSLGERATINC) is framework-1. One can recognise an Ig-like domain in the interval 21-121 (DIVMTQSPDS…YYCQQYYSTP (101 aa)). Cys-43 and Cys-114 are joined by a disulfide. Residues 44-60 (KSSQSVLYSSNNKNYLA) form a complementarity-determining-1 region. Residues 61-75 (WYQQKPGQPPKLLIY) are framework-2. The interval 76 to 82 (WASTRES) is complementarity-determining-2. Residues 83–114 (GVPDRFSGSGSGTDFTLTISSLQAEDVAVYYC) form a framework-3 region. The interval 115–121 (QQYYSTP) is complementarity-determining-3.

Immunoglobulins are composed of two identical heavy chains and two identical light chains; disulfide-linked.

The protein resides in the secreted. The protein localises to the cell membrane. In terms of biological role, v segment of the variable domain of immunoglobulins light chain that participates in the antigen recognition. Immunoglobulins, also known as antibodies, are membrane-bound or secreted glycoproteins produced by B lymphocytes. In the recognition phase of humoral immunity, the membrane-bound immunoglobulins serve as receptors which, upon binding of a specific antigen, trigger the clonal expansion and differentiation of B lymphocytes into immunoglobulins-secreting plasma cells. Secreted immunoglobulins mediate the effector phase of humoral immunity, which results in the elimination of bound antigens. The antigen binding site is formed by the variable domain of one heavy chain, together with that of its associated light chain. Thus, each immunoglobulin has two antigen binding sites with remarkable affinity for a particular antigen. The variable domains are assembled by a process called V-(D)-J rearrangement and can then be subjected to somatic hypermutations which, after exposure to antigen and selection, allow affinity maturation for a particular antigen. The protein is Immunoglobulin kappa variable 4-1 of Homo sapiens (Human).